The primary structure comprises 984 residues: Ephrin type-B receptor 1 (984 aa).

The signal sequence occupies residues 1–17 (MALDCLLLFLLASAVAA). Over 18-540 (MEETLMDTRT…YKSELREQLP (523 aa)) the chain is Extracellular. The region spanning 19–201 (EETLMDTRTA…FFKKCPSIVQ (183 aa)) is the Eph LBD domain. Fibronectin type-III domains lie at 322 to 432 (VPSG…TNQA) and 433 to 528 (APST…TLTD). Asn334, Asn426, and Asn480 each carry an N-linked (GlcNAc...) asparagine glycan. A helical transmembrane segment spans residues 541–563 (LIAGSAAAGVVFVVSLVAISIVC). Residues 564–984 (SRKRAYSKEA…QMNQSPSVMA (421 aa)) lie on the Cytoplasmic side of the membrane. Tyr600 bears the Phosphotyrosine mark. Residues 619–882 (VKIEEVIGAG…EIVNTLDKMI (264 aa)) enclose the Protein kinase domain. ATP is bound by residues 625-633 (IGAGEFGEV) and Lys651. Asp744 (proton acceptor) is an active-site residue. Positions 911 to 975 (TAFTTVDDWL…LSSIHSMRVQ (65 aa)) constitute an SAM domain. Tyr928 carries the phosphotyrosine; by autocatalysis modification. Residues 982 to 984 (VMA) carry the PDZ-binding motif.

Belongs to the protein kinase superfamily. Tyr protein kinase family. Ephrin receptor subfamily. As to quaternary structure, heterotetramer upon binding of the ligand. The heterotetramer is composed of an ephrin dimer and a receptor dimer. Oligomerization is probably required to induce biological responses. Interacts with EPHB6; transphosphorylates EPHB6 to form an active signaling complex. Interacts with PICK1. Interacts (through Tyr-594) with NCK1 (via SH2 domain); activates the JUN cascade to regulate cell adhesion. The ligand-activated form interacts (through Tyr-928) with GRB7 and GRB10 (via SH2 domains). The ligand-activated form interacts (residues within the catalytic domain) with GRB2 (via SH2 domain). Interacts with GRB2, SHC1 and SRC; activates the MAPK/ERK cascade to regulate cell migration. Interacts with CBL; regulates receptor degradation through ubiquitination. Interacts with ACP1. Phosphorylated. Autophosphorylation is stimulated by the ligand EFNB1. Required for interaction with SH2 domain-containing interactors, for activation of the MAPK/ERK and JUN signaling cascades and for ubiquitination by CBL. Post-translationally, ubiquitinated; (EFNB1)ligand-induced poly- and/or multi-ubiquitination by CBL is regulated by SRC and leads to lysosomal degradation. Expressed in neural stem and progenitor cells in the dentate gyrus. Expressed in myogenic progenitor cells.

It localises to the cell membrane. The protein localises to the early endosome membrane. Its subcellular location is the cell projection. It is found in the dendrite. The enzyme catalyses L-tyrosyl-[protein] + ATP = O-phospho-L-tyrosyl-[protein] + ADP + H(+). Its function is as follows. Receptor tyrosine kinase which binds promiscuously transmembrane ephrin-B family ligands residing on adjacent cells, leading to contact-dependent bidirectional signaling into neighboring cells. The signaling pathway downstream of the receptor is referred to as forward signaling while the signaling pathway downstream of the ephrin ligand is referred to as reverse signaling. Cognate/functional ephrin ligands for this receptor include EFNB1, EFNB2 and EFNB3. During nervous system development, regulates retinal axon guidance redirecting ipsilaterally ventrotemporal retinal ganglion cells axons at the optic chiasm midline. This probably requires repulsive interaction with EFNB2. In the adult nervous system together with EFNB3, regulates chemotaxis, proliferation and polarity of the hippocampus neural progenitors. In addition to its role in axon guidance also plays an important redundant role with other ephrin-B receptors in development and maturation of dendritic spines and synapse formation. May also regulate angiogenesis. More generally, may play a role in targeted cell migration and adhesion. Upon activation by EFNB1 and probably other ephrin-B ligands activates the MAPK/ERK and the JNK signaling cascades to regulate cell migration and adhesion respectively. Involved in the maintenance of the pool of satellite cells (muscle stem cells) by promoting their self-renewal and reducing their activation and differentiation. The polypeptide is Ephrin type-B receptor 1 (Ephb1) (Mus musculus (Mouse)).